Consider the following 360-residue polypeptide: WD repeat domain phosphoinositide-interacting protein 4 (360 aa).

WD repeat units lie at residues 1–34 (MTQQPLRGVTSLRFNQDQSCFCCAMETGVRIYNV), 40–84 (KGHL…IWDD), 92–128 (KEKLVLEFTFTKPVLSVRMRHDKIVIVLKNRIYVYSF), 133–174 (RKLF…LVDL), 183–222 (SAPFTINAHQSDIACVSLNQPGTVVASASQKGTLIRLFDT), 227–266 (KLVELRRGTDPATLYCINFSHDSSFLCASSDKGTVHIFAL), and 284–329 (GPMI…ICVD). The short motif at 231–234 (LRRG) is the L/FRRG motif element.

It belongs to the WD repeat PROPPIN family. In terms of assembly, interacts with WIPI1. Interacts with WIPI2. Interacts with ATG2A and ATG2B. Interacts with ULK1. May interact with the PRKAA1, PRKAA2, PRKAB1 and PRKAG1 subunits of the AMPK kinase. May interact with NUDC. Ubiquitously expressed, with high expression in skeletal muscle and heart. Weakly expressed in liver and placenta. Expression is down-regulated in pancreatic and in kidney tumors.

The protein localises to the preautophagosomal structure. It localises to the cytoplasm. Its activity is regulated as follows. Activated upon amino-acid starvation. Its function is as follows. Component of the autophagy machinery that controls the major intracellular degradation process by which cytoplasmic materials are packaged into autophagosomes and delivered to lysosomes for degradation. Binds phosphatidylinositol 3-phosphate (PtdIns3P). Activated by the STK11/AMPK signaling pathway upon starvation, WDR45 is involved in autophagosome assembly downstream of WIPI2, regulating the size of forming autophagosomes. Together with WIPI1, promotes ATG2 (ATG2A or ATG2B)-mediated lipid transfer by enhancing ATG2-association with phosphatidylinositol 3-monophosphate (PI3P)-containing membranes. Probably recruited to membranes through its PtdIns3P activity. The sequence is that of WD repeat domain phosphoinositide-interacting protein 4 (WDR45) from Homo sapiens (Human).